We begin with the raw amino-acid sequence, 120 residues long: MTDVDLAFDEQEYIPAVAQDADSGDVLMLAYVTEEALRKTRETGEAHYYSRSRDELWHKGGTSGHTQAVKEVRVDCDGDALLYIVDQTGGACHTGYESCFHRTVDGETVGEQVFDPDDVY.

A Mg(2+)-binding site is contributed by D75. C76 is a binding site for Zn(2+). Positions 77 and 79 each coordinate Mg(2+). The Zn(2+) site is built by C92 and C99.

Belongs to the PRA-CH family. In terms of assembly, homodimer. It depends on Mg(2+) as a cofactor. Zn(2+) is required as a cofactor.

Its subcellular location is the cytoplasm. The catalysed reaction is 1-(5-phospho-beta-D-ribosyl)-5'-AMP + H2O = 1-(5-phospho-beta-D-ribosyl)-5-[(5-phospho-beta-D-ribosylamino)methylideneamino]imidazole-4-carboxamide. It functions in the pathway amino-acid biosynthesis; L-histidine biosynthesis; L-histidine from 5-phospho-alpha-D-ribose 1-diphosphate: step 3/9. In terms of biological role, catalyzes the hydrolysis of the adenine ring of phosphoribosyl-AMP. This chain is Phosphoribosyl-AMP cyclohydrolase, found in Haloarcula marismortui (strain ATCC 43049 / DSM 3752 / JCM 8966 / VKM B-1809) (Halobacterium marismortui).